Here is a 1002-residue protein sequence, read N- to C-terminus: SIT4-associating protein SAP155 (1002 aa).

Disordered stretches follow at residues 51 to 131 (GTSD…APMM), 214 to 273 (QQQL…ANED), 609 to 645 (EQLK…ESDY), 868 to 901 (DNTT…GGGQ), and 940 to 1002 (NTEN…YDHE). A Phosphoserine modification is found at S58. Residues 62-97 (EYSHGDEVKTARGDQKSRFEKDDQQERYEKEEEERS) are compositionally biased toward basic and acidic residues. Residues 98–114 (MNSSESSTTSFSSGSTS) are compositionally biased toward low complexity. Residues 220–241 (SSQEDVYVESDTEQEEEKEDDN) show a composition bias toward acidic residues. The residue at position 255 (S255) is a Phosphoserine. Acidic residues predominate over residues 262–273 (NNNDDDDDANED). Residues 609–626 (EQLKTKHSPTRDTDHDLK) are compositionally biased toward basic and acidic residues. T613 and T618 each carry phosphothreonine. Acidic residues predominate over residues 635–645 (DNNDNDDESDY). The segment covering 868–885 (DNTTVLTPNGDASNNNEI) has biased composition (polar residues). Positions 956-976 (SNSNINNTNHNSNNSNNNDNN) are enriched in low complexity. Residues 991 to 1002 (EDADNDNDYDHE) are compositionally biased toward acidic residues.

It belongs to the SAPS family. Associates with the SIT4 protein phosphatase catalytic subunit in a cell-cycle-dependent manner. Hyperphosphorylated in the absence of SIT4.

Its subcellular location is the cytoplasm. Positive regulator of protein phosphatase SIT4. Involved in directing expression of TOR-repressed genes and in dephosphorylation of NPR1 in response to nutrient starvation. Negatively modulates K(+) efflux of the cell by the Na(+)-K(+)/H(+) antiporter NHA1. The sequence is that of SIT4-associating protein SAP155 (SAP155) from Saccharomyces cerevisiae (strain ATCC 204508 / S288c) (Baker's yeast).